The chain runs to 292 residues: Elongation factor Ts (292 aa).

An involved in Mg(2+) ion dislocation from EF-Tu region spans residues 82-85; the sequence is TDFV.

It belongs to the EF-Ts family.

It is found in the cytoplasm. Its function is as follows. Associates with the EF-Tu.GDP complex and induces the exchange of GDP to GTP. It remains bound to the aminoacyl-tRNA.EF-Tu.GTP complex up to the GTP hydrolysis stage on the ribosome. The protein is Elongation factor Ts of Legionella pneumophila (strain Lens).